We begin with the raw amino-acid sequence, 260 residues long: Glutathione S-transferase domain-containing protein DDB_G0274223 (260 aa).

Positions 7-96 (KVDYIFYTNN…YLAQKYNTFL (90 aa)) constitute a GST N-terminal domain. A GST C-terminal domain is found at 102–233 (NPHENSDVIT…GFKTFNPSAL (132 aa)).

The protein belongs to the GST superfamily.

The sequence is that of Glutathione S-transferase domain-containing protein DDB_G0274223 from Dictyostelium discoideum (Social amoeba).